We begin with the raw amino-acid sequence, 260 residues long: Uroplakin-1b (260 aa).

The Cytoplasmic portion of the chain corresponds to 1–15; the sequence is MAKDNSTVRCFQGLL. A helical membrane pass occupies residues 16–36; that stretch reads IFGNVIIGCCGIALTAECIFF. The Extracellular segment spans residues 37 to 60; it reads VSDQHSLYPLLEATDNDDIYGAAW. A helical transmembrane segment spans residues 61-81; it reads IGIFVGICLFCLSVLGIVGIM. The Cytoplasmic segment spans residues 82–86; sequence KSSRK. The chain crosses the membrane as a helical span at residues 87-107; that stretch reads ILLAYFILMFIVYAFEVASCI. The Extracellular portion of the chain corresponds to 108 to 229; sequence TAATQQDFFT…ELISGPMNRH (122 aa). The chain crosses the membrane as a helical span at residues 230–250; it reads AWGVAWFGFAILCWTFWVLLG. Topologically, residues 251 to 260 are cytoplasmic; it reads TMFYWSRIEY.

Belongs to the tetraspanin (TM4SF) family. In terms of assembly, heterodimer with uroplakin-3A (UPK3A) or uroplakin-3B (UPK3B). In terms of processing, N-glycosylated with high-mannose oligosaccharides. Bladder epithelium.

The protein resides in the membrane. Functionally, component of the asymmetric unit membrane (AUM); a highly specialized biomembrane elaborated by terminally differentiated urothelial cells. May play an important role in normal bladder epithelial physiology, possibly in regulating membrane permeability of superficial umbrella cells or in stabilizing the apical membrane through AUM/cytoskeletal interactions. This chain is Uroplakin-1b (UPK1B), found in Homo sapiens (Human).